The sequence spans 458 residues: Ammonium transporter Rh type B (458 aa).

Topologically, residues 1-13 (MAGSPSRAAGRRL) are cytoplasmic. The chain crosses the membrane as a helical span at residues 14–34 (QLPLLCLFLQGATAVLFAVFV). The Extracellular portion of the chain corresponds to 35–61 (RYNHKTDAALWHRSNHSNADNEFYFRY). Asparagine 49 carries N-linked (GlcNAc...) asparagine glycosylation. A helical transmembrane segment spans residues 62–82 (PSFQDVHAMVFVGFGFLMVFL). The Cytoplasmic portion of the chain corresponds to 83-86 (QRYG). The chain crosses the membrane as a helical span at residues 87 to 107 (FSSVGFTFLLAAFALQWSTLV). The Extracellular portion of the chain corresponds to 108–124 (QGFLHSFHGGHIHVGVE). A helical transmembrane segment spans residues 125–145 (SMINADFCAGAVLISFGAVLG). At 146-149 (KTGP) the chain is on the cytoplasmic side. A helical membrane pass occupies residues 150–170 (AQLLLMALLEVVLFGINEFVL). The Extracellular segment spans residues 171–178 (LHLLGVRD). A helical membrane pass occupies residues 179 to 201 (AGGSMTIHTFGAYFGLVLSRVLY). Residues 202–219 (RPQLEKSKHRQGSVYHSD) are Cytoplasmic-facing. A helical membrane pass occupies residues 220–240 (LFAMIGTIFLWIFWPSFNAAL). Residues 241 to 251 (TALGAGQHRTA) lie on the Extracellular side of the membrane. Residues 252-272 (LNTYYSLAASTLGTFALSALV) traverse the membrane as a helical segment. The Cytoplasmic segment spans residues 273-282 (GEDGRLDMVH). Residues 283–303 (IQNAALAGGVVVGTSSEMMLT) form a helical membrane-spanning segment. A topological domain (extracellular) is located at residue proline 304. The helical transmembrane segment at 305–325 (FGALTAGFLAGTVSTLGYKFF) threads the bilayer. At 326–346 (RPILESKFKVQDTCGVHNLHG) the chain is on the cytoplasmic side. A helical membrane pass occupies residues 347–367 (MPGVLGALLGVLVAGLATHEA). The Extracellular portion of the chain corresponds to 368–393 (YGDGLESVFPLIAEGQRSATSQAMHQ). Residues 394–414 (LFGLFVTLMFASVGGGLGGLL) traverse the membrane as a helical segment. The Cytoplasmic segment spans residues 415–458 (LKLPFLDSPPDSQCYEDQVHWQVPGEHEDKAQRPLRVEEADTQA). Positions 416 to 424 (KLPFLDSPP) are interaction with ANK3. Positions 429-432 (YEDQ) match the Basolateral sorting signal motif. Positions 439 to 458 (GEHEDKAQRPLRVEEADTQA) are disordered.

This sequence belongs to the ammonium transporter (TC 2.A.49) family. Rh subfamily. Interacts (via C-terminus) with ANK2 and ANK3; required for targeting to the basolateral membrane. N-glycosylated.

It is found in the cell membrane. Its subcellular location is the basolateral cell membrane. It carries out the reaction NH4(+)(in) = NH4(+)(out). The enzyme catalyses methylamine(out) = methylamine(in). The catalysed reaction is CO2(out) = CO2(in). Functionally, ammonium transporter involved in the maintenance of acid-base homeostasis. Transports ammonium and its related derivative methylammonium across the basolateral plasma membrane of epithelial cells likely contributing to renal transepithelial ammonia transport and ammonia metabolism. May transport either NH4(+) or NH3 ammonia species predominantly mediating an electrogenic NH4(+) transport. May act as a CO2 channel providing for renal acid secretion. This is Ammonium transporter Rh type B (RHBG) from Pan troglodytes (Chimpanzee).